Here is a 166-residue protein sequence, read N- to C-terminus: Small ribosomal subunit protein uS5 (166 aa).

The region spanning 11–74 (LDDNVVAINR…EAAKKNLITV (64 aa)) is the S5 DRBM domain.

It belongs to the universal ribosomal protein uS5 family. In terms of assembly, part of the 30S ribosomal subunit. Contacts proteins S4 and S8.

Its function is as follows. With S4 and S12 plays an important role in translational accuracy. Functionally, located at the back of the 30S subunit body where it stabilizes the conformation of the head with respect to the body. The polypeptide is Small ribosomal subunit protein uS5 (Lactiplantibacillus plantarum (strain ATCC BAA-793 / NCIMB 8826 / WCFS1) (Lactobacillus plantarum)).